A 434-amino-acid chain; its full sequence is Chaperone SurA (434 aa).

Positions 1–22 are cleaved as a signal peptide; the sequence is MKPSKHLIFALFALAISQPTMA. PpiC domains are found at residues 173–274 and 283–383; these read DVEY…KIMD and IEEV…QLEE.

It localises to the periplasm. It catalyses the reaction [protein]-peptidylproline (omega=180) = [protein]-peptidylproline (omega=0). Functionally, chaperone involved in the correct folding and assembly of outer membrane proteins. Recognizes specific patterns of aromatic residues and the orientation of their side chains, which are found more frequently in integral outer membrane proteins. May act in both early periplasmic and late outer membrane-associated steps of protein maturation. The chain is Chaperone SurA from Shewanella sp. (strain MR-4).